The sequence spans 272 residues: NADPH-dependent 7-cyano-7-deazaguanine reductase (272 aa).

A substrate-binding site is contributed by 82–84 (IES). 84–85 (SK) is a binding site for NADPH. Cysteine 178 functions as the Thioimide intermediate in the catalytic mechanism. Aspartate 185 serves as the catalytic Proton donor. 217–218 (HE) lines the substrate pocket. Residue 246–247 (RG) coordinates NADPH.

This sequence belongs to the GTP cyclohydrolase I family. QueF type 2 subfamily. Homodimer.

Its subcellular location is the cytoplasm. The enzyme catalyses 7-aminomethyl-7-carbaguanine + 2 NADP(+) = 7-cyano-7-deazaguanine + 2 NADPH + 3 H(+). It functions in the pathway tRNA modification; tRNA-queuosine biosynthesis. Catalyzes the NADPH-dependent reduction of 7-cyano-7-deazaguanine (preQ0) to 7-aminomethyl-7-deazaguanine (preQ1). The chain is NADPH-dependent 7-cyano-7-deazaguanine reductase from Stenotrophomonas maltophilia (strain R551-3).